Reading from the N-terminus, the 435-residue chain is Glutamyl-tRNA reductase (435 aa).

Substrate-binding positions include 49-52 (TCNR), Ser-109, 114-116 (ETQ), and Gln-120. The active-site Nucleophile is the Cys-50. 189 to 194 (GAGEMS) provides a ligand contact to NADP(+).

The protein belongs to the glutamyl-tRNA reductase family. As to quaternary structure, homodimer.

It catalyses the reaction (S)-4-amino-5-oxopentanoate + tRNA(Glu) + NADP(+) = L-glutamyl-tRNA(Glu) + NADPH + H(+). It functions in the pathway porphyrin-containing compound metabolism; protoporphyrin-IX biosynthesis; 5-aminolevulinate from L-glutamyl-tRNA(Glu): step 1/2. Its function is as follows. Catalyzes the NADPH-dependent reduction of glutamyl-tRNA(Glu) to glutamate 1-semialdehyde (GSA). The polypeptide is Glutamyl-tRNA reductase (Listeria monocytogenes serotype 4b (strain F2365)).